A 210-amino-acid polypeptide reads, in one-letter code: Probable GTP-binding protein EngB (210 aa).

An EngB-type G domain is found at 25–199 (TGIEVAFAGR…RQKLDSWFNE (175 aa)). Residues 33–40 (GRSNAGKS), 60–64 (GRTQL), 78–81 (DLPG), 145–148 (TKAD), and 178–180 (FSS) contribute to the GTP site. The Mg(2+) site is built by Ser40 and Thr62.

Belongs to the TRAFAC class TrmE-Era-EngA-EngB-Septin-like GTPase superfamily. EngB GTPase family. The cofactor is Mg(2+).

Functionally, necessary for normal cell division and for the maintenance of normal septation. The chain is Probable GTP-binding protein EngB from Klebsiella pneumoniae subsp. pneumoniae (strain ATCC 700721 / MGH 78578).